Here is a 322-residue protein sequence, read N- to C-terminus: tRNA dimethylallyltransferase (322 aa).

18 to 25 (GPTASGKS) contacts ATP. Residue 20–25 (TASGKS) participates in substrate binding. Interaction with substrate tRNA stretches follow at residues 43–46 (DSRQ) and 167–171 (QRLVR).

The protein belongs to the IPP transferase family. Monomer. Mg(2+) is required as a cofactor.

The catalysed reaction is adenosine(37) in tRNA + dimethylallyl diphosphate = N(6)-dimethylallyladenosine(37) in tRNA + diphosphate. Its function is as follows. Catalyzes the transfer of a dimethylallyl group onto the adenine at position 37 in tRNAs that read codons beginning with uridine, leading to the formation of N6-(dimethylallyl)adenosine (i(6)A). The chain is tRNA dimethylallyltransferase from Chlorobium phaeobacteroides (strain BS1).